The chain runs to 388 residues: MKWLLLLGLVALSECIIYKVPLVRKKSLRRNLSEHGLLKDFLKKHNRNPASKYFPQTEAPTLIDEQPLENYLDVEYFGTIGIGTPAQDFTVIFDTGSSNLWVPSVYCSSLACTNHNLFNPQDSSTYQSTSGTLSITYGTGSMTGILGYDTVQVGGISDTNQIFGLSETEPGSFLYYAPFDGILGLAYPSISSSGATPVFDNIWDQGLVSQDLFSVYLSADDQSGSVVIFGGIDSSYYTGSLNWVPVSVEGYWQISVDSITMNGEAIACAEGCQAIVDTGTSLLTGPTSPIANIQSDIGASENSDGEMVVSCSAISSLPDIVFTINGVQYPLPPSAYILQSQGSCTSGFQGMDVPTESGELWILGDVFIRQYFTVFDRANNQVGLAPVA.

The first 15 residues, Met-1–Cys-15, serve as a signal peptide directing secretion. A propeptide spans Ile-16–Leu-62 (activation peptide). One can recognise a Peptidase A1 domain in the interval Tyr-76–Ala-385. Asp-94 is an active-site residue. A disulfide bridge connects residues Cys-107 and Cys-112. Residue Ser-130 is modified to Phosphoserine. A disulfide bridge links Cys-268 with Cys-272. Asp-277 is an active-site residue. Cysteines 311 and 344 form a disulfide.

This sequence belongs to the peptidase A1 family.

It localises to the secreted. The catalysed reaction is Preferential cleavage: hydrophobic, preferably aromatic, residues in P1 and P1' positions. Cleaves 1-Phe-|-Val-2, 4-Gln-|-His-5, 13-Glu-|-Ala-14, 14-Ala-|-Leu-15, 15-Leu-|-Tyr-16, 16-Tyr-|-Leu-17, 23-Gly-|-Phe-24, 24-Phe-|-Phe-25 and 25-Phe-|-Tyr-26 bonds in the B chain of insulin.. Functionally, shows particularly broad specificity; although bonds involving phenylalanine and leucine are preferred, many others are also cleaved to some extent. The chain is Pepsin A (PGA) from Macaca mulatta (Rhesus macaque).